The sequence spans 942 residues: Protein FAM184B (942 aa).

Disordered regions lie at residues 1–26 (MASALNSKIHPPGTCASSKADARGGS) and 73–97 (QEDLQDTGAETRTRLPQEQSRTSED). 3 coiled-coil regions span residues 89–150 (QEQS…RVLI), 196–337 (EMHQ…DRLM), and 387–495 (SETQ…SLLE). A disordered region spans residues 486–542 (STKLQNSLLEDPCSRPKKPARDEGLEKLTDEEESSSDEEERTGESVKGKSDLQPPFE). Over residues 504–513 (PARDEGLEKL) the composition is skewed to basic and acidic residues. Acidic residues predominate over residues 514–526 (TDEEESSSDEEER). Coiled-coil stretches lie at residues 575–619 (NKDS…ESLR) and 686–815 (EKGL…ERRF). The disordered stretch occupies residues 880 to 934 (APPITKSPSLDPSPSCSQPYKPTQLLDGKTASRTQDGEPAQPKEAPQKQGSPHQE). Positions 885–900 (KSPSLDPSPSCSQPYK) are enriched in polar residues.

This sequence belongs to the FAM184 family.

The sequence is that of Protein FAM184B (Fam184b) from Mus musculus (Mouse).